The chain runs to 263 residues: Cell division coordinator CpoB (263 aa).

The N-terminal stretch at 1-26 (MSSNFRHQLLSLSLLVGIAAPWAAFA) is a signal peptide. The stretch at 44–88 (QLERISNAHSQLLTQLQQQLSDNQSDIDSLRGQIQENQYQLNQVV) forms a coiled coil. Positions 106–123 (AAAQSTSGDQSGAAASTT) are enriched in low complexity. Residues 106-139 (AAAQSTSGDQSGAAASTTPTADAGTANAGAPVKS) are disordered. 3 TPR repeats span residues 143 to 176 (NTDY…YPDS), 180 to 213 (PNAN…YPKS), and 217 to 250 (ADAM…YPGT).

The protein belongs to the CpoB family. Homotrimer. Interacts directly with the central domain of TolA and with PBP1B. Binding to TolA disrupts the homotrimer to form a YbgF/TolA heterodimer with weak affinity. Forms a quaternary complex with PBP1B-LpoB and TolA.

It localises to the periplasm. Mediates coordination of peptidoglycan synthesis and outer membrane constriction during cell division. Promotes physical and functional coordination of the PBP1B-LpoB and Tol machines, and regulates PBP1B activity in response to Tol energy state. The protein is Cell division coordinator CpoB of Escherichia coli (strain K12).